A 918-amino-acid polypeptide reads, in one-letter code: Chaperone protein ClpC1, chloroplastic (918 aa).

A Clp R domain is found at 88–230 (FERFTEKAIK…RTQVIRMVGE (143 aa)). 2 repeat regions span residues 91-156 (FTEK…IGRG) and 166-230 (FTPR…MVGE). An i region spans residues 251–498 (LEEYGTNLTK…RVRLRHAQLP (248 aa)). 296 to 303 (GEPGVGKT) serves as a coordination point for ATP. A UVR domain is found at 505–540 (DKELRQVTKDKNEAVRGQDFEKAGELRDREMELKAQ). Residues 565–756 (VTEADIQHIV…LLIMTSNVGS (192 aa)) form an II region. An ATP-binding site is contributed by 639-646 (GPTGVGKS).

The protein belongs to the ClpA/ClpB family. ClpC subfamily. As to expression, widely expressed.

It localises to the plastid. The protein resides in the chloroplast. Functionally, molecular chaperone that may interact with a ClpP-like protease involved in degradation of denatured proteins in the chloroplast. This Oryza sativa subsp. japonica (Rice) protein is Chaperone protein ClpC1, chloroplastic (CLPC1).